Consider the following 93-residue polypeptide: MVRAVVATLLVVLVVASCVSAQLNFSPGWGKRAAAGGEGTGMHPPAGAVVPPPSSLAGESCGTIPVTTVMHIYRLIRAEATRLVQCQDEEYLG.

The N-terminal stretch at 1-21 is a signal peptide; sequence MVRAVVATLLVVLVVASCVSA. Gln22 is subject to Pyrrolidone carboxylic acid. Trp29 carries the tryptophan amide modification. The propeptide occupies 33–93; the sequence is AAAGGEGTGM…VQCQDEEYLG (61 aa). The disordered stretch occupies residues 34–56; that stretch reads AAGGEGTGMHPPAGAVVPPPSSL.

It belongs to the AKH/HRTH/RPCH family. In terms of tissue distribution, strongly expressed in the eyestalk and weakly in brain. Not expressed in other tissues tested.

It localises to the secreted. Its function is as follows. This hormone adapts the animal to light backgrounds by stimulating concentration of the pigment of its red body-chromatophores. The protein is Red pigment-concentrating hormone of Penaeus monodon (Giant tiger prawn).